The chain runs to 122 residues: Large ribosomal subunit protein uL18 (122 aa).

The protein belongs to the universal ribosomal protein uL18 family. Part of the 50S ribosomal subunit; part of the 5S rRNA/L5/L18/L25 subcomplex. Contacts the 5S and 23S rRNAs.

This is one of the proteins that bind and probably mediate the attachment of the 5S RNA into the large ribosomal subunit, where it forms part of the central protuberance. The polypeptide is Large ribosomal subunit protein uL18 (Trichlorobacter lovleyi (strain ATCC BAA-1151 / DSM 17278 / SZ) (Geobacter lovleyi)).